The chain runs to 108 residues: TYRO protein tyrosine kinase-binding protein (108 aa).

An N-terminal signal peptide occupies residues 1–25; sequence MGRLGPSNGLLPLLLAVGGFSLVQA. At 26–36 the chain is on the extracellular side; sequence QRECSCSAVSP. The helical transmembrane segment at 37–57 threads the bilayer; that stretch reads GILAGIVLGDLVLTLLIALAV. Position 46 (Asp-46) interacts with Ca(2+). The Cytoplasmic segment spans residues 58 to 108; it reads YSLGRLVPRTRGAVDVTRKQHIAETESAYQELQGQRSDVYSDLNTQRQYYK. In terms of domain architecture, ITAM spans 75 to 103; the sequence is RKQHIAETESAYQELQGQRSDVYSDLNTQ. A phosphotyrosine mark is found at Tyr-86 and Tyr-97.

Belongs to the TYROBP family. In terms of assembly, homodimer; disulfide-linked. Homotrimer; disulfide-linked. Homotetramer; disulfide-linked. Homotrimers and homotetramers form when low levels of partner receptors are available and is competitive with assembly with interacting receptors. They may represent alternative oligomerization states or may be intermediates in the receptor assembly process. Binding of a metal cation aids in homooligomerization through coordination of the metal ion by the subunits of the oligomer. Interacts with TREM1. Interacts with TREM2. Interacts with CLECSF5. Interacts with CD300LB and CD300C2. Interacts with CD300E. Interacts (via ITAM domain) with SYK (via SH2 domains); activates SYK mediating neutrophils and macrophages integrin-mediated activation. Interacts with KLRC2. Interacts with CD300H. Interacts with KLRD1. Interacts with SIGLEC1. In terms of processing, following ligand binding by associated receptors, tyrosine phosphorylated in the ITAM domain which leads to activation of additional tyrosine kinases and subsequent cell activation. In terms of tissue distribution, highly expressed in spleen, liver and thymus. Weakly expressed in lymph nodes. Expressed in peripheral blood leukocytes, granulocytes, macrophages, and monocytes. LPS does not increase expression in granulocytes.

The protein resides in the cell membrane. Its function is as follows. Adapter protein which non-covalently associates with activating receptors found on the surface of a variety of immune cells to mediate signaling and cell activation following ligand binding by the receptors. TYROBP is tyrosine-phosphorylated in the ITAM domain following ligand binding by the associated receptors which leads to activation of additional tyrosine kinases and subsequent cell activation. Also has an inhibitory role in some cells. Non-covalently associates with activating receptors of the CD300 family to mediate cell activation. Also mediates cell activation through association with activating receptors of the CD200R family. Required for neutrophil activation mediated by integrin. Required for the activation of myeloid cells mediated by the CLEC5A/MDL1 receptor. Associates with natural killer (NK) cell receptors such as the KLRD1/KLRC2 heterodimer to mediate NK cell activation. Associates with TREM1 to mediate activation of neutrophils and monocytes. Associates with TREM2 on monocyte-derived dendritic cells to mediate up-regulation of chemokine receptor CCR7 and dendritic cell maturation and survival. Association with TREM2 mediates cytokine-induced formation of multinucleated giant cells which are formed by the fusion of macrophages. Stabilizes the TREM2 C-terminal fragment (TREM2-CTF) produced by TREM2 ectodomain shedding which suppresses the release of pro-inflammatory cytokines. In microglia, required with TREM2 for phagocytosis of apoptotic neurons. Required with ITGAM/CD11B in microglia to control production of microglial superoxide ions which promote the neuronal apoptosis that occurs during brain development. Promotes pro-inflammatory responses in microglia following nerve injury which accelerates degeneration of injured neurons. Positively regulates the expression of the IRAK3/IRAK-M kinase and IL10 production by liver dendritic cells and inhibits their T cell allosimulatory ability. Negatively regulates B cell proliferation. Required for CSF1-mediated osteoclast cytoskeletal organization. Positively regulates multinucleation during osteoclast development. This Sus scrofa (Pig) protein is TYRO protein tyrosine kinase-binding protein.